A 187-amino-acid polypeptide reads, in one-letter code: Orotate phosphoribosyltransferase (187 aa).

Residues Arg98, Lys99, Lys102, His104, and 128–136 (EDVTTTGGS) each bind 5-phospho-alpha-D-ribose 1-diphosphate. Thr132 and Arg160 together coordinate orotate.

This sequence belongs to the purine/pyrimidine phosphoribosyltransferase family. PyrE subfamily. As to quaternary structure, homodimer. Mg(2+) serves as cofactor.

It carries out the reaction orotidine 5'-phosphate + diphosphate = orotate + 5-phospho-alpha-D-ribose 1-diphosphate. It functions in the pathway pyrimidine metabolism; UMP biosynthesis via de novo pathway; UMP from orotate: step 1/2. Its function is as follows. Catalyzes the transfer of a ribosyl phosphate group from 5-phosphoribose 1-diphosphate to orotate, leading to the formation of orotidine monophosphate (OMP). The sequence is that of Orotate phosphoribosyltransferase from Bradyrhizobium diazoefficiens (strain JCM 10833 / BCRC 13528 / IAM 13628 / NBRC 14792 / USDA 110).